Consider the following 35-residue polypeptide: Kappa-theraphotoxin-Tb1c (35 aa).

Disulfide bonds link cysteine 3/cysteine 18, cysteine 10/cysteine 23, and cysteine 17/cysteine 30.

The protein belongs to the neurotoxin 10 (Hwtx-1) family. 59 (Tltx) subfamily. In terms of assembly, monomer. In terms of tissue distribution, expressed by the venom gland.

The protein resides in the secreted. Its function is as follows. Blocks Kv4.2/KCND2 voltage-gated potassium channels probably by shifting the voltage-dependence of channel activation to more depolarized potentials and by binding to the S3-S4 linker region of the voltage sensor domain. In Theraphosa blondi (Goliath birdeating spider), this protein is Kappa-theraphotoxin-Tb1c.